The chain runs to 214 residues: Thymidylate kinase (214 aa).

13–20 is an ATP binding site; that stretch reads GPDACGKS.

This sequence belongs to the thymidylate kinase family.

It carries out the reaction dTMP + ATP = dTDP + ADP. Its function is as follows. Phosphorylation of dTMP to form dTDP in both de novo and salvage pathways of dTTP synthesis. The sequence is that of Thymidylate kinase from Malacoplasma penetrans (strain HF-2) (Mycoplasma penetrans).